A 1195-amino-acid chain; its full sequence is Phosphatidylinositol-3,5-bisphosphate 3-phosphatase MTMR4 (1195 aa).

Phosphoserine is present on Ser-8. One can recognise a Myotubularin phosphatase domain in the interval 153-570 (EHIRCRQEAE…RALHLWTAVY (418 aa)). The a 1,2-diacyl-sn-glycero-3-phospho-(1D-myo-inositol-3,5-bisphosphate) site is built by Asn-320, Asn-345, and Ile-346. Residues Asn-320, Asn-345, and Ile-346 each coordinate a 1,2-diacyl-sn-glycero-3-phospho-(1D-myo-inositol-3-phosphate). The active-site Phosphocysteine intermediate is the Cys-407. Ser-408, Asp-409, Gly-410, Trp-411, Asp-412, Arg-413, Lys-449, and Arg-453 together coordinate a 1,2-diacyl-sn-glycero-3-phospho-(1D-myo-inositol-3,5-bisphosphate). Residues Ser-408, Asp-409, Gly-410, Trp-411, Asp-412, and Arg-413 each coordinate a 1,2-diacyl-sn-glycero-3-phospho-(1D-myo-inositol-3-phosphate). Position 453 (Arg-453) interacts with a 1,2-diacyl-sn-glycero-3-phospho-(1D-myo-inositol-3-phosphate). Phosphoserine is present on residues Ser-610 and Ser-629. 3 disordered regions span residues 645–756 (EPWH…EHCP), 780–800 (ESSQ…SMLG), and 827–877 (DPST…LLEN). A compositionally biased stretch (basic and acidic residues) spans 720 to 729 (PEIKVLEETK). 2 stretches are compositionally biased toward polar residues: residues 780–795 (ESSQ…QAQP) and 831–854 (DFLN…SSVP). The short motif at 1004-1008 (VPPLY) is the PY-motif; substrate motif for NEDD4 element. Positions 1023-1055 (HRLRQIEAGYKQEVEQLRRQVRELQMRLDIRHC) form a coiled coil. Residues 1114 to 1174 (DHMASHCYNC…VCNSCYEHIQ (61 aa)) form an FYVE-type zinc finger. Zn(2+)-binding residues include Cys-1120, Cys-1123, Cys-1136, Cys-1139, Cys-1144, Cys-1147, Cys-1166, and Cys-1169.

It belongs to the protein-tyrosine phosphatase family. Non-receptor class myotubularin subfamily. As to quaternary structure, homooligomeric. Forms MTMR3:MTMR4 heterooligomers; regulates the localization of both proteins. The MTMR3:MTMR4 heterooligomer can also recruit both CEP55 and PLK1; occurs during early mitosis, regulates the phosphorylation of CEP55 by PLK1 and its recruitment to the midbody where it can mediate cell abscission. Interacts with SMAD2 and SMAD3; negatively regulates TGF-beta signaling through SMAD2 and SMAD3 dephosphorylation and retention in endosomes. Interacts with SMAD1; negatively regulates BMP signaling through SMAD1 dephosphorylation and retention in endosomes. Post-translationally, ubiquitinated. Ubiquitination by NEDD4 probably leads to proteasomal degradation. In terms of processing, phosphorylated by CDK1 during mitosis. As to expression, expressed in brain, heart, kidney, spleen, liver, colon, testis, muscle, placenta, thyroid gland, pancreas, ovary, prostate, skin, peripheral blood, and bone marrow.

It is found in the early endosome membrane. The protein resides in the recycling endosome membrane. It localises to the late endosome membrane. Its subcellular location is the cytoplasmic vesicle. The protein localises to the phagosome membrane. The enzyme catalyses a 1,2-diacyl-sn-glycero-3-phospho-(1D-myo-inositol-3-phosphate) + H2O = a 1,2-diacyl-sn-glycero-3-phospho-(1D-myo-inositol) + phosphate. It carries out the reaction a 1,2-diacyl-sn-glycero-3-phospho-(1D-myo-inositol-3,5-bisphosphate) + H2O = a 1,2-diacyl-sn-glycero-3-phospho-(1D-myo-inositol-5-phosphate) + phosphate. It catalyses the reaction 1,2-dioctanoyl-sn-glycero-3-phospho-(1-D-myo-inositol-3-phosphate) + H2O = 1,2-dioctanoyl-sn-glycero-3-phospho-(1D-myo-inositol) + phosphate. The catalysed reaction is 1,2-dioctanoyl-sn-glycero-3-phospho-(1D-myo-inositol-3,5-bisphosphate) + H2O = 1,2-dioctanoyl-sn-glycero-3-phospho-(1D-myo-inositol-5-phosphate) + phosphate. The phosphatidylinositol-3-phosphate phosphatase activity is inhibited by vanadate. Functionally, lipid phosphatase that specifically dephosphorylates the D-3 position of phosphatidylinositol 3-phosphate and phosphatidylinositol 3,5-bisphosphate, generating phosphatidylinositol and phosphatidylinositol 5-phosphate. Decreases the levels of phosphatidylinositol 3-phosphate, a phospholipid found in cell membranes where it acts as key regulator of both cell signaling and intracellular membrane traffic, in a subset of endosomal membranes to negatively regulate both endocytic recycling and trafficking and/or maturation of endosomes toward lysosomes. Through phosphatidylinositol 3-phosphate turnover in phagosome membranes regulates phagocytosis and phagosome maturation. By decreasing phosphatidylinositol 3-monophosphate (PI3P) levels in immune cells it can also regulate the innate immune response. Beside its lipid phosphatase activity, can also function as a molecular adapter to regulate midbody abscission during mitotic cytokinesis. Can also negatively regulate TGF-beta and BMP signaling through Smad proteins dephosphorylation and retention in endosomes. The protein is Phosphatidylinositol-3,5-bisphosphate 3-phosphatase MTMR4 of Homo sapiens (Human).